The sequence spans 400 residues: Serine/threonine transporter SstT (400 aa).

9 helical membrane passes run 9-29 (LVTQIAIAVVIGIVLAAVWPA), 36-56 (ILGSLFISALKAVAPVLVFVL), 75-95 (VLVLYAVGTLAAATVGVVASM), 134-154 (ALLEANYIGILAWAIALGLAL), 175-195 (VIQLVIRLAPLGILGLVASTF), 209-229 (LLAVLLGCMLFVALVVNPLIV), 281-301 (IAIPLGATINMAGAAITISVL), 323-343 (VVASLCACGASGVAGGSLLLI), and 349-369 (LFGIGNDVAMQVVAIGFIIGI).

Belongs to the dicarboxylate/amino acid:cation symporter (DAACS) (TC 2.A.23) family.

The protein localises to the cell inner membrane. It carries out the reaction L-serine(in) + Na(+)(in) = L-serine(out) + Na(+)(out). The catalysed reaction is L-threonine(in) + Na(+)(in) = L-threonine(out) + Na(+)(out). In terms of biological role, involved in the import of serine and threonine into the cell, with the concomitant import of sodium (symport system). This Acidovorax sp. (strain JS42) protein is Serine/threonine transporter SstT.